The sequence spans 72 residues: MRRVSWSTVLIVVVMVSLFFVEHVVVPAAAGRVLTEKSGDGSATMTVEKMKSTVDSWFQRLASGPSPRGRGH.

Positions 1–30 (MRRVSWSTVLIVVVMVSLFFVEHVVVPAAA) are cleaved as a signal peptide. Pro65 and Pro67 each carry 4-hydroxyproline.

In terms of processing, contains 4-hydroxyproline; hydroxylated on Pro-65 and Pro-67. As to expression, expressed in guard cells, hydathodes, leaf trichomes, and vascular tissues of leaves and roots.

It is found in the secreted. It localises to the extracellular space. The protein localises to the apoplast. Functionally, endogenous secreted peptide that acts as elicitor of immune response and positive regulator of defense response. Amplifies the immune response triggered by flg22, the active epitope of bacterial flagellin. Acts as a negative regulator of root growth. The polypeptide is PAMP-induced secreted peptide 1 (Arabidopsis thaliana (Mouse-ear cress)).